The following is a 363-amino-acid chain: Autophagy-related protein 3 (363 aa).

Basic and acidic residues-rich tracts occupy residues Asp84–Gly106 and Ala129–Asp138. The interval Asp84–Lys171 is flexible region. Residues Asp84 to Asn174 are disordered. The segment covering Glu139–Glu164 has biased composition (acidic residues). The active-site Glycyl thioester intermediate is Cys247. A handle region region spans residues Ser251–Gln339.

This sequence belongs to the ATG3 family. In terms of assembly, monomer. Interacts with atg8 through an intermediate thioester bond through the C-terminal Gly of atg8. Interacts with the C-terminal region of the E1-like atg7 enzyme. Also interacts with the atg12-atg5 conjugate.

The protein localises to the cytoplasm. Functionally, E2 conjugating enzyme required for the cytoplasm to vacuole transport (Cvt) and autophagy. Required for selective autophagic degradation of the nucleus (nucleophagy) as well as for mitophagy which contributes to regulate mitochondrial quantity and quality by eliminating the mitochondria to a basal level to fulfill cellular energy requirements and preventing excess ROS production. Responsible for the E2-like covalent binding of phosphatidylethanolamine to the C-terminal Gly of atg8. The atg12-atg5 conjugate plays a role of an E3 and promotes the transfer of atg8 from atg3 to phosphatidylethanolamine (PE). This step is required for the membrane association of atg8. The formation of the atg8-phosphatidylethanolamine conjugate is essential for autophagy and for the cytoplasm to vacuole transport (Cvt). The atg8-PE conjugate mediates tethering between adjacent membranes and stimulates membrane hemifusion, leading to expansion of the autophagosomal membrane during autophagy. Required for normal mycelial growth and conidiogenesis, and regulates sclerotial formation. Plays an essential role in pathogenesis. This chain is Autophagy-related protein 3, found in Botryotinia fuckeliana (strain BcDW1) (Noble rot fungus).